The chain runs to 571 residues: Potassium-transporting ATPase potassium-binding subunit (571 aa).

11 consecutive transmembrane segments (helical) span residues 3–23 (LIGW…VKPL), 64–84 (LGYG…LYAI), 135–155 (LGLT…AVAL), 179–199 (LYVL…QGMP), 254–274 (LANL…TNVF), 284–304 (GWAI…VTYA), 330–350 (FGIV…CGAV), 357–376 (FTAL…EIIV), 421–441 (MLAI…ATVL), 488–508 (LALG…AIAG), and 527–547 (GGLF…LTFF).

The protein belongs to the KdpA family. As to quaternary structure, the system is composed of three essential subunits: KdpA, KdpB and KdpC.

Its subcellular location is the cell inner membrane. Part of the high-affinity ATP-driven potassium transport (or Kdp) system, which catalyzes the hydrolysis of ATP coupled with the electrogenic transport of potassium into the cytoplasm. This subunit binds the periplasmic potassium ions and delivers the ions to the membrane domain of KdpB through an intramembrane tunnel. The protein is Potassium-transporting ATPase potassium-binding subunit of Methylorubrum populi (strain ATCC BAA-705 / NCIMB 13946 / BJ001) (Methylobacterium populi).